Consider the following 92-residue polypeptide: UPF0250 protein XCC3453 (92 aa).

The protein belongs to the UPF0250 family.

This is UPF0250 protein XCC3453 from Xanthomonas campestris pv. campestris (strain ATCC 33913 / DSM 3586 / NCPPB 528 / LMG 568 / P 25).